We begin with the raw amino-acid sequence, 237 residues long: Purine nucleoside phosphorylase DeoD-type (237 aa).

H4 is an a purine D-ribonucleoside binding site. Phosphate-binding positions include G20, R24, R43, and 87 to 90 (RVGT). A purine D-ribonucleoside is bound by residues 179–181 (EME) and 203–204 (SD). D204 (proton donor) is an active-site residue.

This sequence belongs to the PNP/UDP phosphorylase family. Homohexamer; trimer of homodimers.

It catalyses the reaction a purine D-ribonucleoside + phosphate = a purine nucleobase + alpha-D-ribose 1-phosphate. The enzyme catalyses a purine 2'-deoxy-D-ribonucleoside + phosphate = a purine nucleobase + 2-deoxy-alpha-D-ribose 1-phosphate. Catalyzes the reversible phosphorolytic breakdown of the N-glycosidic bond in the beta-(deoxy)ribonucleoside molecules, with the formation of the corresponding free purine bases and pentose-1-phosphate. The sequence is that of Purine nucleoside phosphorylase DeoD-type from Streptococcus pyogenes serotype M5 (strain Manfredo).